The primary structure comprises 274 residues: Diaminopimelate epimerase (274 aa).

Substrate contacts are provided by Asn11, Gln44, and Asn64. The active-site Proton donor is Cys73. Substrate contacts are provided by residues 74–75 (GN), Asn157, Asn190, and 208–209 (ER). Cys217 (proton acceptor) is an active-site residue. 218–219 (GS) contributes to the substrate binding site.

It belongs to the diaminopimelate epimerase family. As to quaternary structure, homodimer.

The protein resides in the cytoplasm. The catalysed reaction is (2S,6S)-2,6-diaminopimelate = meso-2,6-diaminopimelate. Its pathway is amino-acid biosynthesis; L-lysine biosynthesis via DAP pathway; DL-2,6-diaminopimelate from LL-2,6-diaminopimelate: step 1/1. In terms of biological role, catalyzes the stereoinversion of LL-2,6-diaminopimelate (L,L-DAP) to meso-diaminopimelate (meso-DAP), a precursor of L-lysine and an essential component of the bacterial peptidoglycan. The polypeptide is Diaminopimelate epimerase (Photorhabdus laumondii subsp. laumondii (strain DSM 15139 / CIP 105565 / TT01) (Photorhabdus luminescens subsp. laumondii)).